The primary structure comprises 154 residues: PTS system fructose-specific EIIA component (154 aa).

Residues 8 to 152 enclose the PTS EIIA type-2 domain; that stretch reads TITPLELISL…QTVQDVLAEV (145 aa). His70 (tele-phosphohistidine intermediate) is an active-site residue. A Phosphohistidine; by HPr modification is found at His70.

The protein resides in the cytoplasm. Its function is as follows. The phosphoenolpyruvate-dependent sugar phosphotransferase system (sugar PTS), a major carbohydrate active transport system, catalyzes the phosphorylation of incoming sugar substrates concomitantly with their translocation across the cell membrane. The enzyme II PtfABC PTS system is involved in fructose transport. The sequence is that of PTS system fructose-specific EIIA component from Haloferax volcanii (strain ATCC 29605 / DSM 3757 / JCM 8879 / NBRC 14742 / NCIMB 2012 / VKM B-1768 / DS2) (Halobacterium volcanii).